Here is a 260-residue protein sequence, read N- to C-terminus: MSHHWGYSKHNGPENWHKDFPIANGDRQSPVDIDTATAQHDPALQPLLISYDKAASKSIVNNGHSFNVEFDDSQDNAVLKGGPLSDSYRLIQFHFHWGSSDGQGSEHTVNKKKYAAELHLVHWNTKYGDFGKAVQQPDGLAVLGIFLKIGPASQGLQKVLEALHSIKTKGKRAAFANFDPCSLLPGNLDYWTYPGSLTTPPLLECVTWIVLREPITVSSEQMSHFRTLNFNEEGDAEEAMVDNWRPAQPLKNRKIKASFK.

Serine 2 is modified (N-acetylserine). A Phosphoserine modification is found at serine 2. In terms of domain architecture, Alpha-carbonic anhydrase spans 3–259 (HHWGYSKHNG…LKNRKIKASF (257 aa)). The active-site Proton acceptor is the histidine 64. Asparagine 67 is an active-site residue. Serine 87 carries the post-translational modification Phosphoserine. Histidine 94, histidine 96, and histidine 119 together coordinate Zn(2+). The active site involves tyrosine 127. Position 165 is a phosphoserine (serine 165). 198–199 (TT) lines the substrate pocket.

It belongs to the alpha-carbonic anhydrase family. As to quaternary structure, interacts with SLC4A4. Interaction with SLC4A7 regulates SLC4A7 transporter activity. Interacts with SLC26A6. It depends on Zn(2+) as a cofactor.

The protein localises to the cytoplasm. It localises to the cell membrane. The enzyme catalyses hydrogencarbonate + H(+) = CO2 + H2O. It carries out the reaction urea = cyanamide + H2O. Inhibited by acetazolamide. Functionally, catalyzes the reversible hydration of carbon dioxide. Can also hydrate cyanamide to urea. Involved in the regulation of fluid secretion into the anterior chamber of the eye. Essential for bone resorption and osteoclast differentiation. Contributes to intracellular pH regulation in the duodenal upper villous epithelium during proton-coupled peptide absorption. Stimulates the chloride-bicarbonate exchange activity of SLC26A6. In Mus musculus (Mouse), this protein is Carbonic anhydrase 2 (Ca2).